The following is a 201-amino-acid chain: Adenylyl-sulfate kinase (201 aa).

35 to 42 (GLSGSGKS) contacts ATP. The active-site Phosphoserine intermediate is serine 109.

Belongs to the APS kinase family.

It catalyses the reaction adenosine 5'-phosphosulfate + ATP = 3'-phosphoadenylyl sulfate + ADP + H(+). The protein operates within sulfur metabolism; hydrogen sulfide biosynthesis; sulfite from sulfate: step 2/3. Catalyzes the synthesis of activated sulfate. The protein is Adenylyl-sulfate kinase of Salmonella paratyphi C (strain RKS4594).